The sequence spans 34 residues: Cytochrome b6-f complex subunit 7 (34 aa).

The chain crosses the membrane as a helical span at residues 9 to 29; it reads ALLSFGLIFVGWALGALLLKI.

This sequence belongs to the PetM family. In terms of assembly, the 4 large subunits of the cytochrome b6-f complex are cytochrome b6, subunit IV (17 kDa polypeptide, PetD), cytochrome f and the Rieske protein, while the 4 small subunits are PetG, PetL, PetM and PetN. The complex functions as a dimer.

It is found in the cellular thylakoid membrane. Its function is as follows. Component of the cytochrome b6-f complex, which mediates electron transfer between photosystem II (PSII) and photosystem I (PSI), cyclic electron flow around PSI, and state transitions. In Nostoc sp. (strain PCC 7120 / SAG 25.82 / UTEX 2576), this protein is Cytochrome b6-f complex subunit 7.